The following is a 215-amino-acid chain: Protein GET1 (215 aa).

Residues 1-4 lie on the Lumenal side of the membrane; the sequence is MPSL. A helical transmembrane segment spans residues 5-24; sequence LILIFTIEVAVELINTIGAA. At 25-110 the chain is on the cytoplasmic side; it reads TINNLLWRIF…NFDKYITGIR (86 aa). A coiled-coil region spans residues 72–104; sequence AKWAKLRRQHDKLLEQLEKKKAALDSTKGNFDK. The helical transmembrane segment at 111 to 131 threads the bilayer; that stretch reads WVGTQGLRYFLPFWYAKVPMF. Residues 132–155 lie on the Lumenal side of the membrane; that stretch reads WLPYGWFPYYAEWLVSFPRAPMGS. The chain crosses the membrane as a helical span at residues 156-172; it reads VSIASWQLACTGFVVLI. Over 173–215 the chain is Cytoplasmic; the sequence is KDAITALVVFVMGMRQSNVKQAVPVKAVSGEKASDEKEGKKEL.

The protein belongs to the WRB/GET1 family. In terms of assembly, interacts with GET3.

It is found in the endoplasmic reticulum membrane. Its function is as follows. Required for the post-translational delivery of tail-anchored (TA) proteins to the endoplasmic reticulum. Acts as a membrane receptor for soluble GET3, which recognizes and selectively binds the transmembrane domain of TA proteins in the cytosol. This Pyricularia oryzae (strain 70-15 / ATCC MYA-4617 / FGSC 8958) (Rice blast fungus) protein is Protein GET1.